A 421-amino-acid polypeptide reads, in one-letter code: Imidazolonepropionase (421 aa).

Fe(3+)-binding residues include histidine 81 and histidine 83. 2 residues coordinate Zn(2+): histidine 81 and histidine 83. 3 residues coordinate 4-imidazolone-5-propanoate: arginine 90, tyrosine 153, and histidine 186. An N-formimidoyl-L-glutamate-binding site is contributed by tyrosine 153. Histidine 251 serves as a coordination point for Fe(3+). Zn(2+) is bound at residue histidine 251. Position 254 (glutamate 254) interacts with 4-imidazolone-5-propanoate. Position 326 (aspartate 326) interacts with Fe(3+). Position 326 (aspartate 326) interacts with Zn(2+). N-formimidoyl-L-glutamate is bound by residues asparagine 328 and glycine 330. 4-imidazolone-5-propanoate is bound at residue serine 331.

Belongs to the metallo-dependent hydrolases superfamily. HutI family. Zn(2+) serves as cofactor. The cofactor is Fe(3+).

It localises to the cytoplasm. It catalyses the reaction 4-imidazolone-5-propanoate + H2O = N-formimidoyl-L-glutamate. It functions in the pathway amino-acid degradation; L-histidine degradation into L-glutamate; N-formimidoyl-L-glutamate from L-histidine: step 3/3. Functionally, catalyzes the hydrolytic cleavage of the carbon-nitrogen bond in imidazolone-5-propanoate to yield N-formimidoyl-L-glutamate. It is the third step in the universal histidine degradation pathway. In Streptococcus pyogenes serotype M18 (strain MGAS8232), this protein is Imidazolonepropionase.